A 529-amino-acid polypeptide reads, in one-letter code: Glucose-6-phosphate isomerase (529 aa).

Residue Glu-322 is the Proton donor of the active site. Catalysis depends on residues His-351 and Lys-455.

Belongs to the GPI family.

The protein resides in the cytoplasm. The catalysed reaction is alpha-D-glucose 6-phosphate = beta-D-fructose 6-phosphate. Its pathway is carbohydrate biosynthesis; gluconeogenesis. It functions in the pathway carbohydrate degradation; glycolysis; D-glyceraldehyde 3-phosphate and glycerone phosphate from D-glucose: step 2/4. Functionally, catalyzes the reversible isomerization of glucose-6-phosphate to fructose-6-phosphate. In Thermosynechococcus vestitus (strain NIES-2133 / IAM M-273 / BP-1), this protein is Glucose-6-phosphate isomerase.